A 239-amino-acid polypeptide reads, in one-letter code: Ribonuclease PH (239 aa).

Phosphate contacts are provided by residues R86 and 124–126 (GTR).

It belongs to the RNase PH family. As to quaternary structure, homohexameric ring arranged as a trimer of dimers.

The catalysed reaction is tRNA(n+1) + phosphate = tRNA(n) + a ribonucleoside 5'-diphosphate. Phosphorolytic 3'-5' exoribonuclease that plays an important role in tRNA 3'-end maturation. Removes nucleotide residues following the 3'-CCA terminus of tRNAs; can also add nucleotides to the ends of RNA molecules by using nucleoside diphosphates as substrates, but this may not be physiologically important. Probably plays a role in initiation of 16S rRNA degradation (leading to ribosome degradation) during starvation. This Anaeromyxobacter dehalogenans (strain 2CP-1 / ATCC BAA-258) protein is Ribonuclease PH.